Reading from the N-terminus, the 147-residue chain is Deoxyuridine 5'-triphosphate nucleotidohydrolase (147 aa).

R24 contributes to the Mg(2+) binding site. DUTP is bound by residues 68-70 (PRS), 82-85 (GVID), Y88, G93, I95, and R111.

It belongs to the dUTPase family. It depends on Mg(2+) as a cofactor.

The enzyme catalyses dUTP + H2O = dUMP + diphosphate + H(+). Its function is as follows. This enzyme is involved in nucleotide metabolism: it produces dUMP, the immediate precursor of thymidine nucleotides and it decreases the intracellular concentration of dUTP so that uracil cannot be incorporated into DNA. In Camelus, this protein is Deoxyuridine 5'-triphosphate nucleotidohydrolase (OPG046).